Reading from the N-terminus, the 369-residue chain is 3 beta-hydroxysteroid dehydrogenase type 7 (369 aa).

Y159 (proton acceptor) is an active-site residue. Residue K163 participates in NAD(+) binding. 2 consecutive transmembrane segments (helical) span residues 289-309 (LLPYWLLVFLAALNALLQWLL) and 311-331 (PLVLYAPLLNPYTLAVANTTF).

It belongs to the 3-beta-HSD family.

It localises to the endoplasmic reticulum membrane. The catalysed reaction is 7alpha-hydroxycholesterol + NAD(+) = 7alpha-hydroxycholest-4-en-3-one + NADH + H(+). It carries out the reaction 7alpha,25-dihydroxycholesterol + NAD(+) = 7alpha,25-dihydroxy-4-cholesten-3-one + NADH + H(+). The enzyme catalyses (25R)-cholest-5-en-3beta,7alpha,26-triol + NAD(+) = (25R)-7alpha,26-dihydroxycholest-4-en-3-one + NADH + H(+). It catalyses the reaction (24S)-7alpha-dihydroxycholesterol + NAD(+) = (24S)-7alpha,24-dihydroxycholest-4-en-3-one + NADH + H(+). The protein operates within lipid metabolism; steroid biosynthesis. Functionally, the 3-beta-HSD enzymatic system plays a crucial role in the biosynthesis of all classes of hormonal steroids. HSD VII is active against four 7-alpha-hydroxylated sterols. Does not metabolize several different C(19/21) steroids as substrates. Involved in bile acid synthesis. Plays a key role in cell positioning and movement in lymphoid tissues by mediating degradation of 7-alpha,25-dihydroxycholesterol (7-alpha,25-OHC): 7-alpha,25-OHC acts as a ligand for the G protein-coupled receptor GPR183/EBI2, a chemotactic receptor for a number of lymphoid cells. The polypeptide is 3 beta-hydroxysteroid dehydrogenase type 7 (Homo sapiens (Human)).